Reading from the N-terminus, the 141-residue chain is HTH-type transcriptional repressor NsrR (141 aa).

Positions 2–129 (QLTSFTDYGL…DNYTLADLVE (128 aa)) constitute an HTH rrf2-type domain. The H-T-H motif DNA-binding region spans 28–51 (ISEVTEVYGVSRNHMVKIINQLSR). C91, C96, and C102 together coordinate [2Fe-2S] cluster.

[2Fe-2S] cluster serves as cofactor.

Nitric oxide-sensitive repressor of genes involved in protecting the cell against nitrosative stress. May require iron for activity. The polypeptide is HTH-type transcriptional repressor NsrR (Klebsiella pneumoniae subsp. pneumoniae (strain ATCC 700721 / MGH 78578)).